Consider the following 174-residue polypeptide: Crossover junction endodeoxyribonuclease RuvC (174 aa).

Active-site residues include Asp-8, Glu-69, and Asp-141. The Mg(2+) site is built by Asp-8, Glu-69, and Asp-141.

The protein belongs to the RuvC family. As to quaternary structure, homodimer which binds Holliday junction (HJ) DNA. The HJ becomes 2-fold symmetrical on binding to RuvC with unstacked arms; it has a different conformation from HJ DNA in complex with RuvA. In the full resolvosome a probable DNA-RuvA(4)-RuvB(12)-RuvC(2) complex forms which resolves the HJ. It depends on Mg(2+) as a cofactor.

It localises to the cytoplasm. The catalysed reaction is Endonucleolytic cleavage at a junction such as a reciprocal single-stranded crossover between two homologous DNA duplexes (Holliday junction).. Its function is as follows. The RuvA-RuvB-RuvC complex processes Holliday junction (HJ) DNA during genetic recombination and DNA repair. Endonuclease that resolves HJ intermediates. Cleaves cruciform DNA by making single-stranded nicks across the HJ at symmetrical positions within the homologous arms, yielding a 5'-phosphate and a 3'-hydroxyl group; requires a central core of homology in the junction. The consensus cleavage sequence is 5'-(A/T)TT(C/G)-3'. Cleavage occurs on the 3'-side of the TT dinucleotide at the point of strand exchange. HJ branch migration catalyzed by RuvA-RuvB allows RuvC to scan DNA until it finds its consensus sequence, where it cleaves and resolves the cruciform DNA. The sequence is that of Crossover junction endodeoxyribonuclease RuvC from Xanthomonas campestris pv. campestris (strain 8004).